A 184-amino-acid polypeptide reads, in one-letter code: Photosystem I assembly protein Ycf4 (184 aa).

Helical transmembrane passes span 22-42 and 64-84; these read LCWA…GFSS and IVMC…WCTI.

This sequence belongs to the Ycf4 family.

Its subcellular location is the plastid. It is found in the chloroplast thylakoid membrane. Its function is as follows. Seems to be required for the assembly of the photosystem I complex. In Angiopteris evecta (Mule's foot fern), this protein is Photosystem I assembly protein Ycf4.